We begin with the raw amino-acid sequence, 96 residues long: UPF0251 protein VPA0321 (96 aa).

It belongs to the UPF0251 family.

In Vibrio parahaemolyticus serotype O3:K6 (strain RIMD 2210633), this protein is UPF0251 protein VPA0321.